Reading from the N-terminus, the 577-residue chain is Arginine--tRNA ligase (577 aa).

The short motif at 122 to 132 (PNVAKEMHVGH) is the 'HIGH' region element.

The protein belongs to the class-I aminoacyl-tRNA synthetase family. Monomer.

It is found in the cytoplasm. The catalysed reaction is tRNA(Arg) + L-arginine + ATP = L-arginyl-tRNA(Arg) + AMP + diphosphate. The sequence is that of Arginine--tRNA ligase from Escherichia coli O9:H4 (strain HS).